The sequence spans 114 residues: Small ribosomal subunit protein uS13m (114 aa).

A disordered region spans residues 92–114; the sequence is DGLPLRGQRSHTNARTSRKRIRK.

It belongs to the universal ribosomal protein uS13 family. As to quaternary structure, part of the small ribosomal subunit.

It is found in the mitochondrion. Functionally, located at the top of the head of the small subunit, it contacts several helices of the 18S rRNA. The protein is Small ribosomal subunit protein uS13m (RPS13) of Oenothera berteroana (Bertero's evening primrose).